The chain runs to 35 residues: GLTRPSKRCLAGSAPCEFHRGYTCCSGHCLIWVCA.

A propeptide spanning residues 1–8 is cleaved from the precursor; sequence GLTRPSKR. Disulfide bonds link Cys-9–Cys-25, Cys-16–Cys-29, and Cys-24–Cys-34.

It belongs to the conotoxin O1 superfamily. In terms of tissue distribution, expressed by the venom duct.

The protein localises to the secreted. In terms of biological role, probable neurotoxin with unknown target. Possibly targets ion channels. The polypeptide is Conotoxin Cal6.1d (Californiconus californicus (California cone)).